The primary structure comprises 423 residues: tRNA(Ile)-lysidine synthase (423 aa).

18–23 (SGGADS) provides a ligand contact to ATP.

The protein belongs to the tRNA(Ile)-lysidine synthase family.

It localises to the cytoplasm. It catalyses the reaction cytidine(34) in tRNA(Ile2) + L-lysine + ATP = lysidine(34) in tRNA(Ile2) + AMP + diphosphate + H(+). Ligates lysine onto the cytidine present at position 34 of the AUA codon-specific tRNA(Ile) that contains the anticodon CAU, in an ATP-dependent manner. Cytidine is converted to lysidine, thus changing the amino acid specificity of the tRNA from methionine to isoleucine. This is tRNA(Ile)-lysidine synthase from Aromatoleum aromaticum (strain DSM 19018 / LMG 30748 / EbN1) (Azoarcus sp. (strain EbN1)).